A 232-amino-acid chain; its full sequence is MFPYLTRMNLSIKMGGLTLKESSPNAFLNNTTIARRFKHEYAPRFKIVQKKQKGRVPVRTGGSIKGSTLQFGKYGLRLKSEGIRISAQQLKEADNAIMRYVRPLNNGHLWRRLCTNVAVCIKGNETRMGKGKGGFDHWMVRVPTGKILFEINGDDLHEKVAREAFRKAGTKLPGVYEFVSLDSLVRVGLHSFKNPKDDPVKNFYDENAKKPSKKYLNILKSQEPQYKLFRGR.

A mitochondrion-targeting transit peptide spans 1–41 (MFPYLTRMNLSIKMGGLTLKESSPNAFLNNTTIARRFKHEY).

The protein belongs to the universal ribosomal protein uL16 family. In terms of assembly, component of the mitochondrial large ribosomal subunit (mt-LSU). Mature yeast 74S mitochondrial ribosomes consist of a small (37S) and a large (54S) subunit. The 37S small subunit contains a 15S ribosomal RNA (15S mt-rRNA) and 34 different proteins. The 54S large subunit contains a 21S rRNA (21S mt-rRNA) and 46 different proteins.

Its subcellular location is the mitochondrion. Component of the mitochondrial ribosome (mitoribosome), a dedicated translation machinery responsible for the synthesis of mitochondrial genome-encoded proteins, including at least some of the essential transmembrane subunits of the mitochondrial respiratory chain. The mitoribosomes are attached to the mitochondrial inner membrane and translation products are cotranslationally integrated into the membrane. The protein is Large ribosomal subunit protein uL16m (MRPL16) of Saccharomyces cerevisiae (strain ATCC 204508 / S288c) (Baker's yeast).